Reading from the N-terminus, the 180-residue chain is Isopentenyl-diphosphate Delta-isomerase (180 aa).

Residues His26 and His32 each coordinate Mn(2+). The Nudix hydrolase domain maps to 30–168 (ALHLAFSVLL…PELFTAWFPQ (139 aa)). Residue Cys70 is part of the active site. A Mg(2+)-binding site is contributed by Cys70. Residue His72 coordinates Mn(2+). Residue Glu90 coordinates Mg(2+). Mn(2+) contacts are provided by Glu117 and Glu119. Glu119 is an active-site residue.

The protein belongs to the IPP isomerase type 1 family. Mg(2+) serves as cofactor. The cofactor is Mn(2+).

The protein localises to the cytoplasm. The catalysed reaction is isopentenyl diphosphate = dimethylallyl diphosphate. It functions in the pathway isoprenoid biosynthesis; dimethylallyl diphosphate biosynthesis; dimethylallyl diphosphate from isopentenyl diphosphate: step 1/1. Catalyzes the 1,3-allylic rearrangement of the homoallylic substrate isopentenyl (IPP) to its highly electrophilic allylic isomer, dimethylallyl diphosphate (DMAPP). In Photobacterium profundum (strain SS9), this protein is Isopentenyl-diphosphate Delta-isomerase.